The following is a 162-amino-acid chain: MTEQLNTNQQNDEAQFMIQRIYIKDLSYETPNTPAVFQQQWEPELKLDLNTTTTQLDKNVYEVVLTVTATVMNQKTTAFLVEVKQAGIFTIQGAAASQLDHLLHSFCPSILFPYAREAITSQVIRGSFPQLVLAPINFDALYMQQLEEKQKATGAKDETVSH.

It belongs to the SecB family. In terms of assembly, homotetramer, a dimer of dimers. One homotetramer interacts with 1 SecA dimer.

It localises to the cytoplasm. One of the proteins required for the normal export of preproteins out of the cell cytoplasm. It is a molecular chaperone that binds to a subset of precursor proteins, maintaining them in a translocation-competent state. It also specifically binds to its receptor SecA. This chain is Protein-export protein SecB, found in Legionella pneumophila subsp. pneumophila (strain Philadelphia 1 / ATCC 33152 / DSM 7513).